The sequence spans 265 residues: Speedy protein E13 (265 aa).

The tract at residues 1–80 (MGQILGKIMM…EPEKELAPEP (80 aa)) is disordered. The segment covering 66–80 (DESDDEPEKELAPEP) has biased composition (acidic residues).

The protein belongs to the Speedy/Ringo family.

This chain is Speedy protein E13, found in Homo sapiens (Human).